The following is a 151-amino-acid chain: Large ribosomal subunit protein uL13 (151 aa).

It belongs to the universal ribosomal protein uL13 family. Part of the 50S ribosomal subunit.

Its function is as follows. This protein is one of the early assembly proteins of the 50S ribosomal subunit, although it is not seen to bind rRNA by itself. It is important during the early stages of 50S assembly. This chain is Large ribosomal subunit protein uL13, found in Synechococcus sp. (strain JA-2-3B'a(2-13)) (Cyanobacteria bacterium Yellowstone B-Prime).